The following is a 110-amino-acid chain: Early nodulin-12A (110 aa).

The first 24 residues, 1–24 (MASFFLSSLVLFLAALILVPQGLA), serve as a signal peptide directing secretion. Positions 31–110 (VYEPPVNGPP…HPTEEHNIHF (80 aa)) are disordered. Over residues 32–43 (YEPPVNGPPVNK) the composition is skewed to pro residues. A run of 3 repeats spans residues 34 to 38 (PPVNG), 39 to 43 (PPVNK), and 44 to 48 (PPQKE). An 11 X 5 AA approximate tandem repeats of P-P-[VQRH]-[NKH]-[GKE] region spans residues 34 to 88 (PPVNGPPVNKPPQKETPVHKPPQKETPVHKPPQKEPPRHKPPQKEPPRHKPPHKK). Residues 45 to 81 (PQKETPVHKPPQKETPVHKPPQKEPPRHKPPQKEPPR) are compositionally biased toward basic and acidic residues. One copy of the 4; approximate repeat lies at 49 to 53 (TPVHK). Repeat unit 5 spans residues 54 to 58 (PPQKE). A 6; approximate repeat occupies 59–63 (TPVHK). 5 repeat units span residues 64-68 (PPQKE), 69-73 (PPRHK), 74-78 (PPQKE), 79-83 (PPRHK), and 84-88 (PPHKK). Over residues 82-93 (HKPPHKKSHLHV) the composition is skewed to basic residues. The span at 101-110 (HPTEEHNIHF) shows a compositional bias: basic and acidic residues.

The protein belongs to the plant proline-rich protein superfamily. ENOD12 family. In terms of tissue distribution, root nodules, stem and flower.

The protein localises to the secreted. It is found in the cell wall. Its function is as follows. Involved in the infection process during the plant-rhizobium interaction. This chain is Early nodulin-12A (ENOD12A), found in Pisum sativum (Garden pea).